We begin with the raw amino-acid sequence, 440 residues long: D-serine dehydratase (440 aa).

K116 carries the post-translational modification N6-(pyridoxal phosphate)lysine.

This sequence belongs to the serine/threonine dehydratase family. DsdA subfamily. In terms of assembly, monomer. The cofactor is pyridoxal 5'-phosphate.

It catalyses the reaction D-serine = pyruvate + NH4(+). The chain is D-serine dehydratase from Salmonella choleraesuis (strain SC-B67).